A 215-amino-acid polypeptide reads, in one-letter code: Pentapeptide repeat protein QnrB4 (215 aa).

2 Pentapeptide repeat domains span residues 25–104 and 117–191; these read TFFN…SFMN and ITNT…RGVD.

It belongs to the pentapeptide repeat protein family.

Probably plays a role in resistance to quinolone antibiotics. Only inhibits ATP-dependent DNA supercoiling by E.coli gyrase at high concentration (30 uM). Protects E.coli gyrase supercoiling activity from inhibition by fluoroquinolones (ciprofloxacin) at 0.1 uM, does not protect M.tuberculosis gyrase activity. This is Pentapeptide repeat protein QnrB4 from Escherichia coli.